The primary structure comprises 175 residues: Peptide deformylase (175 aa).

Positions 96 and 138 each coordinate Fe cation. The active site involves Glu-139. His-142 contacts Fe cation.

This sequence belongs to the polypeptide deformylase family. It depends on Fe(2+) as a cofactor.

The enzyme catalyses N-terminal N-formyl-L-methionyl-[peptide] + H2O = N-terminal L-methionyl-[peptide] + formate. In terms of biological role, removes the formyl group from the N-terminal Met of newly synthesized proteins. Requires at least a dipeptide for an efficient rate of reaction. N-terminal L-methionine is a prerequisite for activity but the enzyme has broad specificity at other positions. In Helicobacter acinonychis (strain Sheeba), this protein is Peptide deformylase.